Reading from the N-terminus, the 339-residue chain is Catalase-related peroxidase (339 aa).

The signal sequence occupies residues 1 to 31 (MIRIRNRWFRWLAIALASLVASIGIATVGFA). The active site involves H58. Y328 contacts heme.

Belongs to the catalase family. It depends on heme as a cofactor.

It localises to the periplasm. Functionally, has an organic peroxide-dependent peroxidase activity. The chain is Catalase-related peroxidase (srpA) from Synechococcus elongatus (strain ATCC 33912 / PCC 7942 / FACHB-805) (Anacystis nidulans R2).